Reading from the N-terminus, the 111-residue chain is Regulator of ribonuclease activity B (111 aa).

It belongs to the RraB family. In terms of assembly, interacts with the C-terminal region of Rne.

Its subcellular location is the cytoplasm. Functionally, globally modulates RNA abundance by binding to RNase E (Rne) and regulating its endonucleolytic activity. Can modulate Rne action in a substrate-dependent manner by altering the composition of the degradosome. This chain is Regulator of ribonuclease activity B, found in Pseudoalteromonas translucida (strain TAC 125).